The following is a 349-amino-acid chain: Cell adhesion molecule CEACAM8 (349 aa).

A signal peptide spans Met1–Ala34. The region spanning Gln35–Pro142 is the Ig-like V-type domain. N-linked (GlcNAc...) asparagine glycosylation is found at Asn104, Asn111, Asn115, Asn152, Asn173, Asn197, Asn224, Asn256, Asn274, Asn288, and Asn309. 2 consecutive Ig-like C2-type domains span residues Pro145 to Asn232 and Pro237 to Ser319. Residues Cys167 and Cys215 are joined by a disulfide bond. Residues Cys259 and Cys299 are joined by a disulfide bond. A lipid anchor (GPI-anchor amidated aspartate) is attached at Asp320. Residues Ala321–Ile349 constitute a propeptide, removed in mature form.

It belongs to the immunoglobulin superfamily. CEA family. In terms of assembly, monomer. Heterodimer with CEACAM6; heterodimerizes via its Ig-like V-type domain. In terms of processing, glycosylated. As to expression, expressed in leukocytes of chronic myeloid Leukemia patients and bone marrow.

It is found in the cell membrane. It localises to the cell surface. Functionally, cell surface glycoprotein that plays a role in cell adhesion in a calcium-independent manner. Mediates heterophilic cell adhesion with other carcinoembryonic antigen-related cell adhesion molecules, such as CEACAM6. Heterophilic interaction with CEACAM8 occurs in activated neutrophils. This is Cell adhesion molecule CEACAM8 from Homo sapiens (Human).